The primary structure comprises 79 residues: UPF0154 protein SUB0399 (79 aa).

The chain crosses the membrane as a helical span at residues 4–24; the sequence is AIWILLIVLALIGGLFGGVFI.

Belongs to the UPF0154 family.

It is found in the cell membrane. The polypeptide is UPF0154 protein SUB0399 (Streptococcus uberis (strain ATCC BAA-854 / 0140J)).